A 398-amino-acid polypeptide reads, in one-letter code: Carbamoyl phosphate synthase small chain (398 aa).

Residues 1-199 (MTPAWATEKP…WNEGFGEQAE (199 aa)) form a CPSase region. Residues S54, G251, and G253 each coordinate L-glutamine. The region spanning 203-391 (HVVAIDYGVK…VNLIREKRGE (189 aa)) is the Glutamine amidotransferase type-1 domain. C280 (nucleophile) is an active-site residue. Residues L281, Q284, N322, G324, and F325 each contribute to the L-glutamine site. Catalysis depends on residues H364 and E366.

It belongs to the CarA family. Composed of two chains; the small (or glutamine) chain promotes the hydrolysis of glutamine to ammonia, which is used by the large (or ammonia) chain to synthesize carbamoyl phosphate. Tetramer of heterodimers (alpha,beta)4.

It carries out the reaction hydrogencarbonate + L-glutamine + 2 ATP + H2O = carbamoyl phosphate + L-glutamate + 2 ADP + phosphate + 2 H(+). The enzyme catalyses L-glutamine + H2O = L-glutamate + NH4(+). Its pathway is amino-acid biosynthesis; L-arginine biosynthesis; carbamoyl phosphate from bicarbonate: step 1/1. It functions in the pathway pyrimidine metabolism; UMP biosynthesis via de novo pathway; (S)-dihydroorotate from bicarbonate: step 1/3. Functionally, small subunit of the glutamine-dependent carbamoyl phosphate synthetase (CPSase). CPSase catalyzes the formation of carbamoyl phosphate from the ammonia moiety of glutamine, carbonate, and phosphate donated by ATP, constituting the first step of 2 biosynthetic pathways, one leading to arginine and/or urea and the other to pyrimidine nucleotides. The small subunit (glutamine amidotransferase) binds and cleaves glutamine to supply the large subunit with the substrate ammonia. This chain is Carbamoyl phosphate synthase small chain, found in Mesorhizobium japonicum (strain LMG 29417 / CECT 9101 / MAFF 303099) (Mesorhizobium loti (strain MAFF 303099)).